The following is a 532-amino-acid chain: Nucleobase-ascorbate transporter 6 (532 aa).

The tract at residues 1–24 (MAGGGAPAPKADEPQPHPPKDQLP) is disordered. Over residues 10–20 (KADEPQPHPPK) the composition is skewed to basic and acidic residues. 12 consecutive transmembrane segments (helical) span residues 39-59 (AILL…LIPT), 75-95 (VIQT…LFGT), 97-117 (LPAV…IILS), 137-157 (TQGA…SGLW), 163-185 (FLSP…EFGF), 192-212 (IEIG…LPHV), 223-243 (FAVI…TVGG), 289-309 (FAMM…FVAV), 361-381 (VGSR…SILG), 392-414 (APII…LSFL), 426-446 (FILG…NEYT), and 463-483 (DMVN…AFFL).

Belongs to the nucleobase:cation symporter-2 (NCS2) (TC 2.A.40) family. As to expression, expressed in the apical region of cotyledons 4 days after imbibition (DAI). Expressed in the whole vasculature at 12 DAI. Expressed in the root central cylinder and lateral root primordia. Expressed in the vasculature of sepals, filaments, carpels and developing siliques.

It is found in the membrane. The polypeptide is Nucleobase-ascorbate transporter 6 (NAT6) (Arabidopsis thaliana (Mouse-ear cress)).